The primary structure comprises 117 residues: Large ribosomal subunit protein bL20c (117 aa).

Belongs to the bacterial ribosomal protein bL20 family.

The protein resides in the plastid. It is found in the chloroplast. Functionally, binds directly to 23S ribosomal RNA and is necessary for the in vitro assembly process of the 50S ribosomal subunit. It is not involved in the protein synthesizing functions of that subunit. The sequence is that of Large ribosomal subunit protein bL20c from Acorus gramineus (Dwarf sweet flag).